Consider the following 176-residue polypeptide: Disulfide bond formation protein B (176 aa).

Residues 1–11 (MLQLTTYRNLQ) are Cytoplasmic-facing. The helical transmembrane segment at 12-28 (VFLVIMTAIGMSFALFF) threads the bilayer. The Periplasmic portion of the chain corresponds to 29–46 (LQRYMGFSPCPLCIFQRI). A disulfide bond links cysteine 38 and cysteine 41. Residues 47–63 (GLMIMGGFALIAALFHP) traverse the membrane as a helical segment. The Cytoplasmic segment spans residues 64–70 (KSMVIRL). A helical transmembrane segment spans residues 71 to 88 (LLWLGSLAGIGWAAIVAG). Residues 89 to 145 (RHVWLQHLPADQVPSCGPGLDYWLDTLPMQQVLKEVFAGSGECASIDWTFLGLSIPE) are Periplasmic-facing. Cysteine 104 and cysteine 131 are disulfide-bonded. Residues 146–164 (QSLILFSILILTHLLILWR) form a helical membrane-spanning segment. Residues 165–176 (IVRPATPKPLAR) are Cytoplasmic-facing.

The protein belongs to the DsbB family.

Its subcellular location is the cell inner membrane. Required for disulfide bond formation in some periplasmic proteins. Acts by oxidizing the DsbA protein. The sequence is that of Disulfide bond formation protein B from Psychrobacter cryohalolentis (strain ATCC BAA-1226 / DSM 17306 / VKM B-2378 / K5).